A 181-amino-acid polypeptide reads, in one-letter code: SecB-like chaperone Rv1957 (181 aa).

Threonine 2 carries the post-translational modification N-acetylthreonine.

The protein belongs to the SecB-like family. Homotetramer, interacts with antitoxin HigA1.

Functionally, chaperone component of an atypical, type II toxin-antitoxin chaperone (TAC) system. Prevents antitoxin HigA1 aggregation in vitro at a 1:3 chaperone:antitoxin ratio, probably also protects antitoxin HigA1 from protease. Required for neutralization of toxin HigB1 upon ectopic expression in Mycobacterium marinum or E.coli. When expressed in E.coli complements a secB deletion, restores export of OmpA and MBP and inhibits aggregation of proOmpC although it is less efficient than endogenous SecB. Complements the general chaperone function of E.coli SecB less well. In Mycobacterium tuberculosis (strain ATCC 25618 / H37Rv), this protein is SecB-like chaperone Rv1957 (secBL).